A 242-amino-acid chain; its full sequence is Small ribosomal subunit protein uS2 (242 aa).

It belongs to the universal ribosomal protein uS2 family.

The sequence is that of Small ribosomal subunit protein uS2 from Shewanella oneidensis (strain ATCC 700550 / JCM 31522 / CIP 106686 / LMG 19005 / NCIMB 14063 / MR-1).